A 553-amino-acid chain; its full sequence is Salicylyl-CoA synthase / salicylate adenylyltransferase (553 aa).

Residue G203 coordinates ATP. Substrate is bound at residue 246-247; sequence HN. The ATP site is built by G320, V342, D426, R441, and K533. Residue K533 participates in substrate binding.

It belongs to the ATP-dependent AMP-binding enzyme family.

It carries out the reaction salicylate + ATP + CoA = 2-hydroxybenzoyl-CoA + AMP + diphosphate. Functionally, involved in the degradation of salicylate via a pathway involving coenzyme A derivative. Catalyzes the conversion of salicylate to salicyloyl-CoA via the formation of a salicylate-adenylate intermediate. The substrate specificity is strong, since benzoate, 3-hydroxybenzoate, 4-hydroxybenzoate, gentisate, 2-aminobenzoate, aminobenzoate, salicylamide, salicylaldoxime and 2-hydroxyphenyl acetate cannot substitute for salicylate. The polypeptide is Salicylyl-CoA synthase / salicylate adenylyltransferase (Streptomyces sp).